Reading from the N-terminus, the 217-residue chain is Zinc finger CCHC-type and RNA-binding motif-containing protein 1 (217 aa).

The RRM domain maps to 10 to 88 (STVYVSNLPF…RVIKASIAID (79 aa)). Residues 105–122 (SKCYECGESGHLSYACPK) form a CCHC-type zinc finger. Positions 120-217 (CPKNMLGERE…YFSDEEELSD (98 aa)) are disordered. Positions 145–163 (PEEEIEEVEVSEEEGEDPA) are enriched in acidic residues. 3 positions are modified to phosphoserine: S155, S210, and S216.

As to quaternary structure, component of the U11/U12 snRNPs that are part of the U12-type spliceosome. Interacts with ZRSR1. As to expression, expressed at higher level in heart and testis, and at lower level in cerebellum. Weakly expressed at low level in liver.

It localises to the nucleus. It is found in the nucleoplasm. This is Zinc finger CCHC-type and RNA-binding motif-containing protein 1 (Zcrb1) from Mus musculus (Mouse).